We begin with the raw amino-acid sequence, 475 residues long: Methylenetetrahydrofolate--tRNA-(uracil-5-)-methyltransferase TrmFO (475 aa).

9–14 contributes to the FAD binding site; sequence GGGLAG. The interval 427 to 447 is disordered; that stretch reads APRNETGRRLRGPEKAALKKR.

It belongs to the MnmG family. TrmFO subfamily. FAD serves as cofactor.

Its subcellular location is the cytoplasm. It carries out the reaction uridine(54) in tRNA + (6R)-5,10-methylene-5,6,7,8-tetrahydrofolate + NADH + H(+) = 5-methyluridine(54) in tRNA + (6S)-5,6,7,8-tetrahydrofolate + NAD(+). The catalysed reaction is uridine(54) in tRNA + (6R)-5,10-methylene-5,6,7,8-tetrahydrofolate + NADPH + H(+) = 5-methyluridine(54) in tRNA + (6S)-5,6,7,8-tetrahydrofolate + NADP(+). Its function is as follows. Catalyzes the folate-dependent formation of 5-methyl-uridine at position 54 (M-5-U54) in all tRNAs. In Methylobacterium radiotolerans (strain ATCC 27329 / DSM 1819 / JCM 2831 / NBRC 15690 / NCIMB 10815 / 0-1), this protein is Methylenetetrahydrofolate--tRNA-(uracil-5-)-methyltransferase TrmFO.